A 137-amino-acid polypeptide reads, in one-letter code: Large ribosomal subunit protein uL16 (137 aa).

Over residues 1–17 the composition is skewed to basic residues; it reads MLSPKRTKFRKQQRGRM. The disordered stretch occupies residues 1-24; sequence MLSPKRTKFRKQQRGRMRGNANSG.

The protein belongs to the universal ribosomal protein uL16 family. Part of the 50S ribosomal subunit.

In terms of biological role, binds 23S rRNA and is also seen to make contacts with the A and possibly P site tRNAs. In Trichodesmium erythraeum (strain IMS101), this protein is Large ribosomal subunit protein uL16.